The primary structure comprises 269 residues: Achromobactin transport ATP-binding protein CbrD (269 aa).

The region spanning 4–240 (ITSRELTLGY…ALVKTVFNLD (237 aa)) is the ABC transporter domain. 36-43 (GSNGCGKS) serves as a coordination point for ATP.

Belongs to the ABC transporter superfamily.

The protein resides in the cell inner membrane. Its function is as follows. Part of the binding-protein-dependent transport system CbrABCD for uptake of the siderophore achromobactin. Probably responsible for energy coupling to the transport system. In Dickeya dadantii (strain 3937) (Erwinia chrysanthemi (strain 3937)), this protein is Achromobactin transport ATP-binding protein CbrD (cbrD).